A 407-amino-acid polypeptide reads, in one-letter code: MRRLPIVLLLSVFSIANCAKVDVDLINETIRDLLHFKSSDPNVTSFHRSSHTLTEHMKNLYENFIDEDSNEDGNLVRAIEPAVGKFEGQEVLVFDVEGFDSHESIMRAELHFYLRRRDSFARRRSRQIRAKSVCVNEYCRQQTLKKIRVGGDENLEEYKVIWDATKSVFDSYHLDAKQAVFRITREHSKMRPYAEMIRKSTPFLVIYSKVNHTLDTVSVMKQTEQTKRKRRDLGNEELREYYNYNSIPLDNDDREPIKRKNGKKNSLSEEISSEDVWQGFGEETSREERERIANEELANDVRVVLLQNKNRCHKEGVLVSLKHFGWDRYVIEPKTIETSFCKGKCAKPMLTSGKASNHAMLQSLFAAEPVCCAPTNLKSLNFWYRDEKGRTVIRNYSKMLIGSCSCL.

Residues methionine 1–cysteine 18 form the signal peptide. 3 N-linked (GlcNAc...) asparagine glycosylation sites follow: asparagine 27, asparagine 42, and asparagine 211. A disordered region spans residues aspartate 252–glutamate 283. A glycan (N-linked (GlcNAc...) asparagine) is linked at asparagine 395.

The protein belongs to the TGF-beta family. Interacts with netrin receptor unc-5; the interaction is direct.

The protein localises to the secreted. Its subcellular location is the extracellular space. In terms of biological role, required for the migration of axonal growth-cones and distal tip cells (DTC) along the dorsal-ventral axis of the body wall. Acts cell nonautonomously and independently of the classical daf-4, sma-6 or daf-1 TGFbeta receptor signaling. During axon migration, facilitates long-range repulsive guidance of unc-6/netrin by enhancing unc-5-unc-40 signaling at the expense of unc-5 alone signaling, probably through direct interaction with receptor unc-5. Involved in cell-cell contact formation in sensory rays in the developing male tail, via a pathway involving plx-2 and mab-20/semaphorin-2A. This chain is BMP-like protein unc-129, found in Caenorhabditis elegans.